Here is a 137-residue protein sequence, read N- to C-terminus: Large ribosomal subunit protein uL16 (137 aa).

It belongs to the universal ribosomal protein uL16 family. As to quaternary structure, part of the 50S ribosomal subunit.

Its function is as follows. Binds 23S rRNA and is also seen to make contacts with the A and possibly P site tRNAs. In Xanthomonas axonopodis pv. citri (strain 306), this protein is Large ribosomal subunit protein uL16.